A 120-amino-acid chain; its full sequence is MHAPSEIRLTFNQDRPQSNEDDGSGLAVQEAKPILQAPPMYKVVLFNDDYTPMDFVVEVLETFFSLNRELATKIMLTVHTEGRAVCGLFTRDIAETKAMQVNQYARESQHPLLCEIEKDG.

A disordered region spans residues 1-27 (MHAPSEIRLTFNQDRPQSNEDDGSGLA).

This sequence belongs to the ClpS family. Binds to the N-terminal domain of the chaperone ClpA.

Involved in the modulation of the specificity of the ClpAP-mediated ATP-dependent protein degradation. This chain is ATP-dependent Clp protease adapter protein ClpS, found in Pseudomonas putida (strain GB-1).